We begin with the raw amino-acid sequence, 455 residues long: Probable ATP-dependent RNA helicase DDX47 (455 aa).

The tract at residues 1–21 is disordered; that stretch reads MAADEEPDSPSGALQTAAEEE. Ala2 bears the N-acetylalanine mark. A Phosphoserine modification is found at Ser9. Residues 24–52 carry the Q motif motif; it reads KTFKDLGVTDVLCEACDQLGWAKPTKIQI. The 172-residue stretch at 55–226 folds into the Helicase ATP-binding domain; that stretch reads IPLALQGRDI…RAALKNPVKC (172 aa). 68–75 is a binding site for ATP; that stretch reads AETGSGKT. Position 149 is a phosphothreonine (Thr149). The DEAD box motif lies at 174-177; the sequence is DEAD. Positions 237–397 constitute a Helicase C-terminal domain; that stretch reads KLQQYYLFIP…VFPTQDEEVM (161 aa). Residues 412–455 are disordered; it reads MELREHGEKKKRKREDAGDDDDKEGAIGVRNKVAGGKMKKRKGR.

Belongs to the DEAD box helicase family. DDX47/RRP3 subfamily. Interacts with AGO1 and AGO2. Interacts with GABARAP. Interacts with NOL8; the interaction is RNA-dependent.

It is found in the nucleus. The protein localises to the nucleolus. The enzyme catalyses ATP + H2O = ADP + phosphate + H(+). Involved in apoptosis. May have a role in rRNA processing and mRNA splicing. Associates with pre-rRNA precursors. This Mus musculus (Mouse) protein is Probable ATP-dependent RNA helicase DDX47 (Ddx47).